The following is a 333-amino-acid chain: Ketol-acid reductoisomerase (NADP(+)) (333 aa).

In terms of domain architecture, KARI N-terminal Rossmann spans 1–179 (MFYDDDADLT…GGTRAGVIKT (179 aa)). Residues 22 to 25 (YGSQ), K45, S48, S50, and 80 to 83 (DTAQ) contribute to the NADP(+) site. H105 is a catalytic residue. G131 serves as a coordination point for NADP(+). Residues 180-325 (TFKDETETDL…KRLRDLMSWV (146 aa)) form the KARI C-terminal knotted domain. Mg(2+) is bound by residues D188, E192, E224, and E228. S249 lines the substrate pocket.

This sequence belongs to the ketol-acid reductoisomerase family. The cofactor is Mg(2+).

It carries out the reaction (2R)-2,3-dihydroxy-3-methylbutanoate + NADP(+) = (2S)-2-acetolactate + NADPH + H(+). It catalyses the reaction (2R,3R)-2,3-dihydroxy-3-methylpentanoate + NADP(+) = (S)-2-ethyl-2-hydroxy-3-oxobutanoate + NADPH + H(+). It functions in the pathway amino-acid biosynthesis; L-isoleucine biosynthesis; L-isoleucine from 2-oxobutanoate: step 2/4. The protein operates within amino-acid biosynthesis; L-valine biosynthesis; L-valine from pyruvate: step 2/4. Involved in the biosynthesis of branched-chain amino acids (BCAA). Catalyzes an alkyl-migration followed by a ketol-acid reduction of (S)-2-acetolactate (S2AL) to yield (R)-2,3-dihydroxy-isovalerate. In the isomerase reaction, S2AL is rearranged via a Mg-dependent methyl migration to produce 3-hydroxy-3-methyl-2-ketobutyrate (HMKB). In the reductase reaction, this 2-ketoacid undergoes a metal-dependent reduction by NADPH to yield (R)-2,3-dihydroxy-isovalerate. The sequence is that of Ketol-acid reductoisomerase (NADP(+)) from Mycobacterium avium.